We begin with the raw amino-acid sequence, 490 residues long: UDP-N-acetylmuramate--L-alanine ligase (490 aa).

Residue 133–139 (GTHGKTS) coordinates ATP.

The protein belongs to the MurCDEF family.

Its subcellular location is the cytoplasm. It catalyses the reaction UDP-N-acetyl-alpha-D-muramate + L-alanine + ATP = UDP-N-acetyl-alpha-D-muramoyl-L-alanine + ADP + phosphate + H(+). It participates in cell wall biogenesis; peptidoglycan biosynthesis. In terms of biological role, cell wall formation. The polypeptide is UDP-N-acetylmuramate--L-alanine ligase (Saccharopolyspora erythraea (strain ATCC 11635 / DSM 40517 / JCM 4748 / NBRC 13426 / NCIMB 8594 / NRRL 2338)).